Consider the following 70-residue polypeptide: Probable protein transport protein Sec61 subunit gamma (70 aa).

At 1-39 the chain is on the cytoplasmic side; the sequence is MADQIQEILDVPREFLKDGIQFIKKCQKPDRREFIKISQ. The helical transmembrane segment at 40 to 58 threads the bilayer; that stretch reads AVGTGFLIMGAVGYLVKLI. Topologically, residues 59–70 are extracellular; the sequence is HIPLNQVLVGGA.

This sequence belongs to the SecE/SEC61-gamma family. As to quaternary structure, heterotrimeric complex composed of SEC61-alpha, SEC61-beta and SEC61-gamma.

It is found in the endoplasmic reticulum membrane. Necessary for protein translocation in the endoplasmic reticulum. In Neurospora crassa (strain ATCC 24698 / 74-OR23-1A / CBS 708.71 / DSM 1257 / FGSC 987), this protein is Probable protein transport protein Sec61 subunit gamma.